The primary structure comprises 224 residues: LRP chaperone MESD (224 aa).

Positions 1–29 are cleaved as a signal peptide; sequence MAASRWLRAVLLFLCASDLLLLPPPNAYA. The segment at 1–155 is chaperone domain; sequence MAASRWLRAV…DRAIFMLRDG (155 aa). Disordered regions lie at residues 28–49 and 178–224; these read YAAD…IRDY and GQMY…REDL. Positions 156-195 are escort domain; sequence SYAWEIKDFLVSQDRCAEVTLEGQMYPGKGGGSKEKNKTK. Over residues 187-224 the composition is skewed to basic and acidic residues; that stretch reads GSKEKNKTKPEKAKKKEGDPKPRASKEDNRAGSRREDL. A glycan (N-linked (GlcNAc...) asparagine) is linked at Asn192. A Prevents secretion from ER motif is present at residues 221–224; the sequence is REDL.

Belongs to the MESD family. In terms of assembly, monomer. Interacts with LRP5; the interaction prevents LRP5 from forming aggregates and chaperones LRP6 to the plasma membrane. Interacts with LRP6; the interaction prevents LRP6 from forming aggregates and chaperones LRP6 to the plasma membrane. Interacts with LRP4; the interaction promotes glycosylation of LRP4 and its cell-surface expression. Expressed in many tissues, but not in skeletal muscles. In the retina expressed in retinal ganglion cells, inner and outer plexiform layers, photoreceptor inner and outer segments and retinal pigment epithelium (at protein level).

The protein localises to the endoplasmic reticulum. Chaperone specifically assisting the folding of beta-propeller/EGF modules within the family of low-density lipoprotein receptors (LDLRs). Acts as a modulator of the Wnt pathway through chaperoning the coreceptors of the canonical Wnt pathway, LRP5 and LRP6, to the plasma membrane. Essential for specification of embryonic polarity and mesoderm induction. Plays an essential role in neuromuscular junction (NMJ) formation by promoting cell-surface expression of LRP4. May regulate phagocytosis of apoptotic retinal pigment epithelium (RPE) cells. The sequence is that of LRP chaperone MESD from Mus musculus (Mouse).